Consider the following 60-residue polypeptide: Large ribosomal subunit protein bL32 (60 aa).

Belongs to the bacterial ribosomal protein bL32 family.

The sequence is that of Large ribosomal subunit protein bL32 from Kosmotoga olearia (strain ATCC BAA-1733 / DSM 21960 / TBF 19.5.1).